Consider the following 245-residue polypeptide: 3-deoxy-manno-octulosonate cytidylyltransferase (245 aa).

It belongs to the KdsB family.

The protein resides in the cytoplasm. It catalyses the reaction 3-deoxy-alpha-D-manno-oct-2-ulosonate + CTP = CMP-3-deoxy-beta-D-manno-octulosonate + diphosphate. It participates in nucleotide-sugar biosynthesis; CMP-3-deoxy-D-manno-octulosonate biosynthesis; CMP-3-deoxy-D-manno-octulosonate from 3-deoxy-D-manno-octulosonate and CTP: step 1/1. Its pathway is bacterial outer membrane biogenesis; lipopolysaccharide biosynthesis. Functionally, activates KDO (a required 8-carbon sugar) for incorporation into bacterial lipopolysaccharide in Gram-negative bacteria. This chain is 3-deoxy-manno-octulosonate cytidylyltransferase, found in Rhodopseudomonas palustris (strain TIE-1).